We begin with the raw amino-acid sequence, 364 residues long: Homeobox protein Nkx-6.1 (364 aa).

The segment at 35–134 (LYPATYPPLP…SSSSSASATS (100 aa)) is disordered. Low complexity-rich tracts occupy residues 48-92 (PSSS…LSAA) and 109-134 (ASGA…SATS). Residues 101–268 (LSRPSMPVAS…KYLAGPERAR (168 aa)) form a repressor domain region. Arg-189 carries the post-translational modification Asymmetric dimethylarginine. The homeobox DNA-binding region spans 236 to 295 (RKHTRPTFSGQQIFALEKTFEQTKYLAGPERARLAYSLGMTESQVKVWFQNRRTKWRKKH). The segment at 294-364 (KHAAEMATAK…LHASEAEGSS (71 aa)) is disordered. The span at 304-317 (KKQDSETERLKGTS) shows a compositional bias: basic and acidic residues. The involved in DNA-binding stretch occupies residues 306 to 364 (QDSETERLKGTSENEEEDDDYNKPLDPNSDDEKITQLLKKHKSSSGGLLLHASEAEGSS).

As to expression, pancreatic beta cells.

It is found in the nucleus. Together with NKX2-2 and IRX3 acts to restrict the generation of motor neurons to the appropriate region of the neural tube. Belongs to the class II proteins of neuronal progenitor factors, which are induced by SHH signals. Transcription factor which binds to specific A/T-rich DNA sequences in the promoter regions of a number of genes. Involved in transcriptional regulation in islet beta cells. Binds to the insulin promoter and is involved in regulation of the insulin gene. In Mesocricetus auratus (Golden hamster), this protein is Homeobox protein Nkx-6.1 (NKX6-1).